Consider the following 245-residue polypeptide: Superoxide dismutase [Mn], mitochondrial (245 aa).

The N-terminal 32 residues, 1–32 (MVNLGSIWQNLLASQAPLQSMTGNATTMAGLA), are a transit peptide targeting the mitochondrion. Residues H58, H106, D196, and H200 each contribute to the Mn(2+) site.

This sequence belongs to the iron/manganese superoxide dismutase family. As to quaternary structure, homotetramer. Requires Mn(2+) as cofactor.

It is found in the mitochondrion matrix. It catalyses the reaction 2 superoxide + 2 H(+) = H2O2 + O2. In terms of biological role, destroys superoxide anion radicals which are normally produced within the cells and which are toxic to biological systems. The chain is Superoxide dismutase [Mn], mitochondrial (sod-2) from Neurospora crassa (strain ATCC 24698 / 74-OR23-1A / CBS 708.71 / DSM 1257 / FGSC 987).